Consider the following 195-residue polypeptide: Probable GTP-binding protein EngB (195 aa).

Positions 24-195 (GLSEVGLSGR…QIWNVIEKYL (172 aa)) constitute an EngB-type G domain. Residues 32 to 39 (GRSNVGKS), 59 to 63 (GKTQT), 77 to 80 (DVPG), 144 to 147 (TKED), and 176 to 178 (YSS) each bind GTP. Residues serine 39 and threonine 61 each coordinate Mg(2+).

Belongs to the TRAFAC class TrmE-Era-EngA-EngB-Septin-like GTPase superfamily. EngB GTPase family. Mg(2+) serves as cofactor.

Necessary for normal cell division and for the maintenance of normal septation. This is Probable GTP-binding protein EngB from Staphylococcus saprophyticus subsp. saprophyticus (strain ATCC 15305 / DSM 20229 / NCIMB 8711 / NCTC 7292 / S-41).